The chain runs to 314 residues: Mitochondrial MRF1 N(5)-glutamine methyltransferase MTQ1 (314 aa).

S-adenosyl-L-methionine contacts are provided by residues 118–122, Asp141, and Asn188; that span reads FTGTG. 188–191 is a binding site for substrate; sequence NPPY.

Belongs to the protein N5-glutamine methyltransferase family.

The protein localises to the mitochondrion. The enzyme catalyses L-glutaminyl-[peptide chain release factor] + S-adenosyl-L-methionine = N(5)-methyl-L-glutaminyl-[peptide chain release factor] + S-adenosyl-L-homocysteine + H(+). In terms of biological role, methylates MRF1 on 'Gln-287' using S-adenosyl L-methionine as methyl donor. In Saccharomyces cerevisiae (strain ATCC 204508 / S288c) (Baker's yeast), this protein is Mitochondrial MRF1 N(5)-glutamine methyltransferase MTQ1 (MTQ1).